Reading from the N-terminus, the 227-residue chain is Uridylate kinase (227 aa).

An ATP-binding site is contributed by 9–10 (GS). Gly-44 contributes to the UMP binding site. ATP is bound by residues Gly-45 and Arg-49. Residues Asp-66 and 114–120 (TVPGHTT) each bind UMP. ATP-binding residues include Thr-140, Phe-146, and Asp-149.

It belongs to the UMP kinase family. In terms of assembly, homohexamer.

The protein localises to the cytoplasm. It carries out the reaction UMP + ATP = UDP + ADP. Its pathway is pyrimidine metabolism; CTP biosynthesis via de novo pathway; UDP from UMP (UMPK route): step 1/1. Its activity is regulated as follows. Inhibited by UTP. Its function is as follows. Catalyzes the reversible phosphorylation of UMP to UDP. The sequence is that of Uridylate kinase from Natronomonas pharaonis (strain ATCC 35678 / DSM 2160 / CIP 103997 / JCM 8858 / NBRC 14720 / NCIMB 2260 / Gabara) (Halobacterium pharaonis).